Here is a 78-residue protein sequence, read N- to C-terminus: MSDIADRVKKIVVEHLGVEAEKVTENANFIDDLGADSLDTVELVMAFEEEFNVEIPDDAAETIQTVGDAIKFLEKNSG.

One can recognise a Carrier domain in the interval 2-77 (SDIADRVKKI…DAIKFLEKNS (76 aa)). S37 bears the O-(pantetheine 4'-phosphoryl)serine mark.

The protein belongs to the acyl carrier protein (ACP) family. 4'-phosphopantetheine is transferred from CoA to a specific serine of apo-ACP by AcpS. This modification is essential for activity because fatty acids are bound in thioester linkage to the sulfhydryl of the prosthetic group.

It localises to the cytoplasm. The protein operates within lipid metabolism; fatty acid biosynthesis. In terms of biological role, carrier of the growing fatty acid chain in fatty acid biosynthesis. The protein is Acyl carrier protein of Methylobacterium sp. (strain 4-46).